The chain runs to 494 residues: Cysteine--tRNA ligase (494 aa).

Cysteine 29 is a binding site for Zn(2+). The 'HIGH' region motif lies at 31–41; the sequence is VTVYDHCHIGH. Zn(2+)-binding residues include cysteine 209, histidine 234, and glutamate 238. Residues 266-270 carry the 'KMSKS' region motif; that stretch reads KMSKS. An ATP-binding site is contributed by lysine 269.

It belongs to the class-I aminoacyl-tRNA synthetase family. As to quaternary structure, monomer. The cofactor is Zn(2+).

It localises to the cytoplasm. The catalysed reaction is tRNA(Cys) + L-cysteine + ATP = L-cysteinyl-tRNA(Cys) + AMP + diphosphate. In Geotalea uraniireducens (strain Rf4) (Geobacter uraniireducens), this protein is Cysteine--tRNA ligase.